The sequence spans 596 residues: Cysteine--tRNA ligase (596 aa).

Positions 1–199 are unknown; that stretch reads MKSKTFLEKN…SQRYFEELRK (199 aa). Residue C212 coordinates Zn(2+). Positions 214–224 match the 'HIGH' region motif; it reads PTVYDEVHIGN. Residues C377, H403, and E407 each contribute to the Zn(2+) site. A 'KMSKS' region motif is present at residues 435 to 439; it reads KMSKS. K438 contacts ATP.

The protein belongs to the class-I aminoacyl-tRNA synthetase family. As to quaternary structure, monomer. It depends on Zn(2+) as a cofactor.

It localises to the cytoplasm. The catalysed reaction is tRNA(Cys) + L-cysteine + ATP = L-cysteinyl-tRNA(Cys) + AMP + diphosphate. The polypeptide is Cysteine--tRNA ligase (cysS) (Mycoplasmopsis pulmonis (strain UAB CTIP) (Mycoplasma pulmonis)).